The sequence spans 361 residues: Probable galacturonosyltransferase-like 5 (361 aa).

Topologically, residues 1 to 6 (MHWITR) are cytoplasmic. A helical; Signal-anchor for type II membrane protein membrane pass occupies residues 7–27 (FSAFFSAALAMILLSPSLQSF). The Lumenal portion of the chain corresponds to 28–361 (SPAAAIRSSH…APYDLYKHSH (334 aa)). Asparagine 218 and asparagine 234 each carry an N-linked (GlcNAc...) asparagine glycan.

Belongs to the glycosyltransferase 8 family.

It is found in the golgi apparatus membrane. It participates in glycan metabolism; pectin biosynthesis. In terms of biological role, may be involved in pectin and/or xylans biosynthesis in cell walls. This Arabidopsis thaliana (Mouse-ear cress) protein is Probable galacturonosyltransferase-like 5 (GATL5).